The primary structure comprises 869 residues: AP-3 complex subunit delta (869 aa).

Ser-2 carries the N-acetylserine modification. HEAT repeat units lie at residues 33 to 70 (NFIS…LHGV), 107 to 142 (SVML…GTHD), 143 to 179 (LARD…KYHD), 180 to 216 (AVKV…KDPQ), 218 to 254 (CLPL…IEPR), 292 to 329 (AAVK…KHLW), and 330 to 366 (AVLE…EDNV). Residues 738 to 869 (ISQDSFNPKR…EQVIIPDFLL (132 aa)) are disordered. Residues 769-780 (ITPQAKTNIQTA) show a composition bias toward polar residues. Over residues 815 to 830 (QEKEESSRIENHQNSE) the composition is skewed to basic and acidic residues. Basic residues predominate over residues 831-850 (KKKKKKKKKKGEGSSKHKSR).

The protein belongs to the adaptor complexes large subunit family. In terms of assembly, adaptor protein complex 3 (AP-3) is a heterotetramer composed of two large adaptins (delta-type subunit and beta-type subunit), a medium adaptin (mu-type subunit) and a small adaptin (sigma-type subunit). Binds to EPSIN2.

Its subcellular location is the cytoplasm. It localises to the golgi apparatus membrane. Functionally, part of the AP-3 complex, an adaptor-related complex which seems to be clathrin-associated. The complex is associated with the Golgi region as well as more peripheral structures. It facilitates the budding of vesicles from the Golgi membrane and may be directly involved in trafficking to the vacuole. It also function in maintaining the identity of lytic vacuoles and in regulating the transition between storage and lytic vacuoles. The chain is AP-3 complex subunit delta (DELTA-ADR) from Arabidopsis thaliana (Mouse-ear cress).